A 129-amino-acid polypeptide reads, in one-letter code: MAREFKRSDRVAQELQKEVAVILQREVKDPRIGMVTVSDVEVSRDLAYAKIFVTFLFDNDPEAIKQGMKGLEKAAPYIRSLLGKAMRLRIVPELRFVYDQSLVEGMRMSNLVSNVIKNDEAKHVAEDSE.

Belongs to the RbfA family. In terms of assembly, monomer. Binds 30S ribosomal subunits, but not 50S ribosomal subunits or 70S ribosomes.

It is found in the cytoplasm. In terms of biological role, one of several proteins that assist in the late maturation steps of the functional core of the 30S ribosomal subunit. Associates with free 30S ribosomal subunits (but not with 30S subunits that are part of 70S ribosomes or polysomes). Required for efficient processing of 16S rRNA. May interact with the 5'-terminal helix region of 16S rRNA. The sequence is that of Ribosome-binding factor A from Actinobacillus succinogenes (strain ATCC 55618 / DSM 22257 / CCUG 43843 / 130Z).